Consider the following 323-residue polypeptide: 8-oxo-dGDP phosphatase NUDT18 (323 aa).

In terms of domain architecture, Nudix hydrolase spans 37–167 (RLRKNVCYVV…DVLHLVELGA (131 aa)). Leu-58 is a binding site for Mg(2+). The Nudix box motif lies at 76 to 97 (GRMEPGETIVEAMQREVKEEAG).

The protein belongs to the Nudix hydrolase family. Mn(2+) is required as a cofactor. The cofactor is Mg(2+).

It catalyses the reaction 8-oxo-dGDP + H2O = 8-oxo-dGMP + phosphate + H(+). The catalysed reaction is 8-oxo-dADP + H2O = 8-oxo-dAMP + phosphate + H(+). The enzyme catalyses 2-oxo-dADP + H2O = 2-oxo-dAMP + phosphate + H(+). It carries out the reaction 8-oxo-GDP + H2O = 8-oxo-GMP + phosphate + H(+). In terms of biological role, mediates the hydrolysis of oxidized nucleoside diphosphate derivatives. Hydrolyzes 8-oxo-7,8-dihydroguanine (8-oxo-Gua)-containing deoxyribo- and ribonucleoside diphosphates to the monophosphates. Hydrolyzes 8-oxo-dGDP and 8-oxo-GDP with the same efficiencies. Also hydrolyzes 8-OH-dADP and 2-OH-dADP. Exhibited no or minimal hydrolysis activity against 8-oxo-dGTP, 8-oxo-GTP, dGTP, GTP, dGDP and GDP. Probably removes oxidized guanine nucleotides from both the DNA and RNA precursor pools. In Mus musculus (Mouse), this protein is 8-oxo-dGDP phosphatase NUDT18.